Here is a 37-residue protein sequence, read N- to C-terminus: Large ribosomal subunit protein bL36 (37 aa).

Belongs to the bacterial ribosomal protein bL36 family.

This chain is Large ribosomal subunit protein bL36, found in Chromobacterium violaceum (strain ATCC 12472 / DSM 30191 / JCM 1249 / CCUG 213 / NBRC 12614 / NCIMB 9131 / NCTC 9757 / MK).